The following is a 305-amino-acid chain: tRNA dimethylallyltransferase (305 aa).

An ATP-binding site is contributed by 8–15; that stretch reads GPTAVGKT. 10-15 contributes to the substrate binding site; the sequence is TAVGKT. Positions 33–36 are interaction with substrate tRNA; the sequence is DSRQ.

This sequence belongs to the IPP transferase family. As to quaternary structure, monomer. Requires Mg(2+) as cofactor.

It carries out the reaction adenosine(37) in tRNA + dimethylallyl diphosphate = N(6)-dimethylallyladenosine(37) in tRNA + diphosphate. Functionally, catalyzes the transfer of a dimethylallyl group onto the adenine at position 37 in tRNAs that read codons beginning with uridine, leading to the formation of N6-(dimethylallyl)adenosine (i(6)A). The polypeptide is tRNA dimethylallyltransferase (Thermotoga maritima (strain ATCC 43589 / DSM 3109 / JCM 10099 / NBRC 100826 / MSB8)).